The chain runs to 774 residues: Multiple C2 domain and transmembrane region protein 11 (774 aa).

Gly residues predominate over residues 1 to 12 (MAVNGTGNGTGD). Positions 1 to 30 (MAVNGTGNGTGDGDFSLKETSPNIGNGGVN) are disordered. C2 domains follow at residues 9 to 145 (GTGD…PQWY), 184 to 307 (VTGE…SLWY), and 338 to 471 (LDES…THSY). Asp-62, Asn-110, Asp-112, and Asp-118 together coordinate Ca(2+). Transmembrane regions (helical) follow at residues 608–628 (LFVV…CFVF) and 722–742 (FVSC…FLAF).

This sequence belongs to the MCTP family. Requires Ca(2+) as cofactor. Observed in flowers.

The protein localises to the endoplasmic reticulum membrane. Functionally, may function as a signaling molecule by regulating the trafficking of other regulators. The protein is Multiple C2 domain and transmembrane region protein 11 of Arabidopsis thaliana (Mouse-ear cress).